We begin with the raw amino-acid sequence, 388 residues long: Nitric oxide reductase FlRd-NAD(+) reductase (388 aa).

This sequence belongs to the FAD-dependent oxidoreductase family. It depends on FAD as a cofactor.

Its subcellular location is the cytoplasm. The enzyme catalyses 2 reduced [nitric oxide reductase rubredoxin domain] + NAD(+) + H(+) = 2 oxidized [nitric oxide reductase rubredoxin domain] + NADH. It participates in nitrogen metabolism; nitric oxide reduction. Functionally, one of at least two accessory proteins for anaerobic nitric oxide (NO) reductase. Reduces the rubredoxin moiety of NO reductase. This Aeromonas salmonicida (strain A449) protein is Nitric oxide reductase FlRd-NAD(+) reductase.